The chain runs to 259 residues: Phosphatidylinositol transfer protein 2 (259 aa).

A coiled-coil region spans residues 231-259 (LTIEDIRKIEEETKAELAKKLEENKAANK).

The protein belongs to the PtdIns transfer protein family. PI transfer class IIA subfamily.

It is found in the cytoplasm. It localises to the golgi apparatus. Catalyzes the transfer of PtdIns and phosphatidylcholine between membranes. The protein is Phosphatidylinositol transfer protein 2 (pitB) of Dictyostelium discoideum (Social amoeba).